The sequence spans 313 residues: Cytochrome f (313 aa).

The first 30 residues, 1 to 30, serve as a signal peptide directing secretion; that stretch reads MRNWSFSKAALTVSLLALSWSPFGPAEVQA. Tyr31, Cys51, Cys54, and His55 together coordinate heme. A helical membrane pass occupies residues 279–298; that stretch reads VQGLIIFFAFVLIAQVFLVL.

The protein belongs to the cytochrome f family. In terms of assembly, the 4 large subunits of the cytochrome b6-f complex are cytochrome b6, subunit IV (17 kDa polypeptide, petD), cytochrome f and the Rieske protein, while the 4 small subunits are PetG, PetL, PetM and PetN. The complex functions as a dimer. Heme serves as cofactor.

It localises to the plastid. The protein localises to the chloroplast thylakoid membrane. Functionally, component of the cytochrome b6-f complex, which mediates electron transfer between photosystem II (PSII) and photosystem I (PSI), cyclic electron flow around PSI, and state transitions. This Nephroselmis olivacea (Green alga) protein is Cytochrome f.